Reading from the N-terminus, the 794-residue chain is Protein transport protein SEC23 G (794 aa).

Cys56, Cys59, Cys78, and Cys81 together coordinate Zn(2+). The tract at residues 56–81 (CSRCGAVLNPYARVDYQSRIWSCPFC) is zinc finger-like.

This sequence belongs to the SEC23/SEC24 family. SEC23 subfamily. In terms of assembly, component of the coat protein complex II (COPII), composed of at least five proteins: the Sec23/24 complex, the Sec13/31 complex and Sar1. Interacts with SEC24A.

Its subcellular location is the cytoplasmic vesicle. It localises to the COPII-coated vesicle membrane. The protein localises to the endoplasmic reticulum membrane. It is found in the membrane. Functionally, component of the coat protein complex II (COPII) which promotes the formation of transport vesicles from the endoplasmic reticulum (ER). The coat has two main functions, the physical deformation of the endoplasmic reticulum membrane into vesicles and the selection of cargo molecules. The sequence is that of Protein transport protein SEC23 G from Arabidopsis thaliana (Mouse-ear cress).